The primary structure comprises 224 residues: MWDSLIVSINDTHKLGLEDCLAVFGHVPITKAVKHVRLTEIDTQTSTFTLKFLHTETGQNIEKIIYFIDNDTGNDTRTATGIKQIFNKMFRIAAEKRKLSLIQIDTVEYPCTLVDLLILVGVALPPLCYLYRPALHAIFFLVPNPVGSTLEAWLDSDLVLRLIIVAEFLTHALETLIFVVPRLKYYRVPGEFVPEWLLLGLLEGYGPARRLDTKARTLGEGSVN.

3 N-linked (GlcNAc...) asparagine glycosylation sites follow: Asn10, Asn70, and Asn74.

Its subcellular location is the endoplasmic reticulum. This is an uncharacterized protein from Saccharomyces cerevisiae (strain ATCC 204508 / S288c) (Baker's yeast).